Here is a 410-residue protein sequence, read N- to C-terminus: MPQEVKRCVLAYSGGLDTSCILAWLIEEGWEVICYMANVGQEEDWDAAREKALKVGAKKVYVEDLREEFINDTVIPAAQANAIYENVYLLGTSLARPIIARRQIQIAEKENCIAVSHGCTGKGNDQVRFELAYYALKPDVQVIAPWRLPVFFERFAGRKDLLEYAAAKGIPVTQTTKKPWSMDENIVHCSYEAGILEDPSMTPPKDMWKLTVDPKDAPDEVEELSIHFEKGAPTKLECKDGTFSGVVSIFYQLNAIARRNGVGRIDIVENRFSGLKSRGCYETPGLTILRTAHMDLEGLTMEREVRALRDQFVTFNLAKILYNGQFFSPCTRMLLAANNVSQEVVNGVVKLSVYKGNVTVLGRKSDTAHLYDEKLSSMDELGGFDPTWTSGFIQIESMRLRNSDEGKHWM.

ATP contacts are provided by residues 11–19 and Ala-37; that span reads AYSGGLDTS. Tyr-88 and Ser-93 together coordinate L-citrulline. 116–124 is an ATP binding site; it reads SHGCTGKGN. Residues Thr-120, Asn-124, and Asp-125 each coordinate L-aspartate. An L-citrulline-binding site is contributed by Asn-124. L-citrulline is bound by residues Arg-128, Ser-181, Ser-190, Glu-269, and Tyr-281.

Belongs to the argininosuccinate synthase family. Type 1 subfamily. As to quaternary structure, homotetramer.

The protein localises to the cytoplasm. It carries out the reaction L-citrulline + L-aspartate + ATP = 2-(N(omega)-L-arginino)succinate + AMP + diphosphate + H(+). It participates in amino-acid biosynthesis; L-arginine biosynthesis; L-arginine from L-ornithine and carbamoyl phosphate: step 2/3. The sequence is that of Argininosuccinate synthase (arg12) from Schizosaccharomyces pombe (strain 972 / ATCC 24843) (Fission yeast).